A 115-amino-acid polypeptide reads, in one-letter code: U3-lycotoxin-Ls1a (115 aa).

The signal sequence occupies residues 1–20 (MKFVLLFGVLLVTLFSYSSA). Residues 21-44 (EMLDDFDQAVEDELLSLIEKEEAR) constitute a propeptide that is removed on maturation. 4 disulfide bridges follow: cysteine 48–cysteine 63, cysteine 55–cysteine 72, cysteine 62–cysteine 87, and cysteine 74–cysteine 85.

It belongs to the neurotoxin 19 (CSTX) family. 01 subfamily. Expressed by the venom gland.

It localises to the secreted. This Lycosa singoriensis (Wolf spider) protein is U3-lycotoxin-Ls1a.